The chain runs to 1070 residues: DNA-directed RNA polymerase subunit beta (1070 aa).

It belongs to the RNA polymerase beta chain family. In plastids the minimal PEP RNA polymerase catalytic core is composed of four subunits: alpha, beta, beta', and beta''. When a (nuclear-encoded) sigma factor is associated with the core the holoenzyme is formed, which can initiate transcription.

It localises to the plastid. The protein resides in the chloroplast. It carries out the reaction RNA(n) + a ribonucleoside 5'-triphosphate = RNA(n+1) + diphosphate. In terms of biological role, DNA-dependent RNA polymerase catalyzes the transcription of DNA into RNA using the four ribonucleoside triphosphates as substrates. This Populus trichocarpa (Western balsam poplar) protein is DNA-directed RNA polymerase subunit beta.